Here is a 523-residue protein sequence, read N- to C-terminus: 2-isopropylmalate synthase (523 aa).

A Pyruvate carboxyltransferase domain is found at 5-267 (VIIFDTTLRD…HTRINHQEIW (263 aa)). Mn(2+)-binding residues include Asp14, His202, His204, and Asn238. The tract at residues 392–523 (RLDYFSVQSG…QNKENNKETV (132 aa)) is regulatory domain.

The protein belongs to the alpha-IPM synthase/homocitrate synthase family. LeuA type 1 subfamily. As to quaternary structure, homodimer. Mn(2+) is required as a cofactor.

The protein localises to the cytoplasm. The enzyme catalyses 3-methyl-2-oxobutanoate + acetyl-CoA + H2O = (2S)-2-isopropylmalate + CoA + H(+). The protein operates within amino-acid biosynthesis; L-leucine biosynthesis; L-leucine from 3-methyl-2-oxobutanoate: step 1/4. In terms of biological role, catalyzes the condensation of the acetyl group of acetyl-CoA with 3-methyl-2-oxobutanoate (2-ketoisovalerate) to form 3-carboxy-3-hydroxy-4-methylpentanoate (2-isopropylmalate). This chain is 2-isopropylmalate synthase, found in Citrobacter koseri (strain ATCC BAA-895 / CDC 4225-83 / SGSC4696).